A 498-amino-acid polypeptide reads, in one-letter code: Ribulose bisphosphate carboxylase large chain (498 aa).

The propeptide occupies 1–2 (MS). Position 3 is an N-acetylproline (P3). Position 14 is an N6,N6,N6-trimethyllysine (K14). Substrate-binding residues include N123 and T173. The active-site Proton acceptor is the K175. A substrate-binding site is contributed by K177. Mg(2+) is bound by residues K201, D203, and E204. An N6-carboxylysine modification is found at K201. Catalysis depends on H294, which acts as the Proton acceptor. Substrate is bound by residues R295, H327, and S379. Positions 471 to 498 (PVDTLDPNDKKQRDNEDTLADKLFGDKG) are disordered.

This sequence belongs to the RuBisCO large chain family. Type I subfamily. In terms of assembly, heterohexadecamer of 8 large chains and 8 small chains; disulfide-linked. The disulfide link is formed within the large subunit homodimers. Requires Mg(2+) as cofactor. In terms of processing, the disulfide bond which can form in the large chain dimeric partners within the hexadecamer appears to be associated with oxidative stress and protein turnover.

The protein resides in the plastid. It carries out the reaction 2 (2R)-3-phosphoglycerate + 2 H(+) = D-ribulose 1,5-bisphosphate + CO2 + H2O. The catalysed reaction is D-ribulose 1,5-bisphosphate + O2 = 2-phosphoglycolate + (2R)-3-phosphoglycerate + 2 H(+). In terms of biological role, ruBisCO catalyzes two reactions: the carboxylation of D-ribulose 1,5-bisphosphate, the primary event in carbon dioxide fixation, as well as the oxidative fragmentation of the pentose substrate in the photorespiration process. Both reactions occur simultaneously and in competition at the same active site. The protein is Ribulose bisphosphate carboxylase large chain (rbcL) of Cuscuta reflexa (Southern Asian dodder).